A 319-amino-acid chain; its full sequence is Lipoyl synthase (319 aa).

The interval 1–32 is disordered; that stretch reads MVVLVDTVSSTPVRPRHPEKAARPDSLSPKKP. Residues 16 to 32 show a composition bias toward basic and acidic residues; it reads RHPEKAARPDSLSPKKP. Residues Cys-61, Cys-66, Cys-72, Cys-87, Cys-91, Cys-94, and Ser-300 each coordinate [4Fe-4S] cluster. Residues 73–289 enclose the Radical SAM core domain; sequence WDKKHATFMI…GKTAYAKGFL (217 aa).

Belongs to the radical SAM superfamily. Lipoyl synthase family. It depends on [4Fe-4S] cluster as a cofactor.

It localises to the cytoplasm. It catalyses the reaction [[Fe-S] cluster scaffold protein carrying a second [4Fe-4S](2+) cluster] + N(6)-octanoyl-L-lysyl-[protein] + 2 oxidized [2Fe-2S]-[ferredoxin] + 2 S-adenosyl-L-methionine + 4 H(+) = [[Fe-S] cluster scaffold protein] + N(6)-[(R)-dihydrolipoyl]-L-lysyl-[protein] + 4 Fe(3+) + 2 hydrogen sulfide + 2 5'-deoxyadenosine + 2 L-methionine + 2 reduced [2Fe-2S]-[ferredoxin]. It participates in protein modification; protein lipoylation via endogenous pathway; protein N(6)-(lipoyl)lysine from octanoyl-[acyl-carrier-protein]: step 2/2. Functionally, catalyzes the radical-mediated insertion of two sulfur atoms into the C-6 and C-8 positions of the octanoyl moiety bound to the lipoyl domains of lipoate-dependent enzymes, thereby converting the octanoylated domains into lipoylated derivatives. The polypeptide is Lipoyl synthase (Rhodopseudomonas palustris (strain BisB5)).